A 613-amino-acid polypeptide reads, in one-letter code: SNW/SKI-interacting protein (613 aa).

Residues 135–170 (EGDLGTVVDEEEELQKEIQETAEETKAAIEKIVNVR) adopt a coiled-coil conformation. The SNW stretch occupies residues 186–350 (SQYIKYKPSQ…KARSERTGAA (165 aa)). Disordered regions lie at residues 219 to 252 (LDPPKFKHKRVPRASGSPPVPVMHSPPRPVTVKD), 315 to 437 (MRSK…RDRD), and 513 to 613 (DEQL…SDRR). Serine 235 and serine 243 each carry phosphoserine. The segment covering 236-247 (PPVPVMHSPPRP) has biased composition (pro residues). Composition is skewed to basic and acidic residues over residues 315 to 335 (MRSKVQKEMVMKDKERKEQEL), 358 to 437 (DRGR…RDRD), 515 to 529 (QLDKIKNTERFKPDK), 538 to 548 (VGSKRDRPVEF), and 562 to 574 (WVSDLKKGKKPLD). Coiled coils occupy residues 318–349 (KVQKEMVMKDKERKEQELRALAQKARSERTGA) and 391–421 (REEREKRIQREKIREERRRERERERRLDAKD). Over residues 577–590 (GSGGTMRASGGGGS) the composition is skewed to gly residues. Basic and acidic residues predominate over residues 592-613 (SRDDDHGGSGRTKINFERSDRR).

The protein belongs to the SNW family. Component of the spliceosome. Interacts with SR45. As to expression, expressed in roots, stems, seedlings, siliques, cotyledons, leaves, inflorescences, seeds and shoot apical meristem.

Its subcellular location is the nucleus speckle. Splicing factor involved in post-transcriptional regulation of circadian clock and flowering time genes. Associates with the pre-mRNA of PRR7, PRR9, ELF3 and GI, and is necessary for the regulation of their alternative splicing and mRNA maturation. Probably involved in splice site recognition. This chain is SNW/SKI-interacting protein (SKIP), found in Arabidopsis thaliana (Mouse-ear cress).